Consider the following 180-residue polypeptide: NAD(P)H-quinone oxidoreductase subunit I, chloroplastic (180 aa).

4Fe-4S ferredoxin-type domains follow at residues 55–84 and 95–124; these read GRIH…VDWR and LNYS…MTEE. Positions 64, 67, 70, 74, 104, 107, 110, and 114 each coordinate [4Fe-4S] cluster.

The protein belongs to the complex I 23 kDa subunit family. As to quaternary structure, NDH is composed of at least 16 different subunits, 5 of which are encoded in the nucleus. The cofactor is [4Fe-4S] cluster.

The protein localises to the plastid. It is found in the chloroplast thylakoid membrane. The catalysed reaction is a plastoquinone + NADH + (n+1) H(+)(in) = a plastoquinol + NAD(+) + n H(+)(out). It carries out the reaction a plastoquinone + NADPH + (n+1) H(+)(in) = a plastoquinol + NADP(+) + n H(+)(out). In terms of biological role, NDH shuttles electrons from NAD(P)H:plastoquinone, via FMN and iron-sulfur (Fe-S) centers, to quinones in the photosynthetic chain and possibly in a chloroplast respiratory chain. The immediate electron acceptor for the enzyme in this species is believed to be plastoquinone. Couples the redox reaction to proton translocation, and thus conserves the redox energy in a proton gradient. This is NAD(P)H-quinone oxidoreductase subunit I, chloroplastic from Oryza nivara (Indian wild rice).